Consider the following 101-residue polypeptide: Urease subunit beta (101 aa).

Belongs to the urease beta subunit family. Heterotrimer of UreA (gamma), UreB (beta) and UreC (alpha) subunits. Three heterotrimers associate to form the active enzyme.

It is found in the cytoplasm. The catalysed reaction is urea + 2 H2O + H(+) = hydrogencarbonate + 2 NH4(+). It participates in nitrogen metabolism; urea degradation; CO(2) and NH(3) from urea (urease route): step 1/1. In Variovorax paradoxus (strain S110), this protein is Urease subunit beta.